Reading from the N-terminus, the 74-residue chain is ATP synthase subunit c (74 aa).

Transmembrane regions (helical) follow at residues 5–25 (LAHI…IGVG) and 49–69 (LFIG…VALL).

It belongs to the ATPase C chain family. As to quaternary structure, F-type ATPases have 2 components, F(1) - the catalytic core - and F(0) - the membrane proton channel. F(1) has five subunits: alpha(3), beta(3), gamma(1), delta(1), epsilon(1). F(0) has three main subunits: a(1), b(2) and c(10-14). The alpha and beta chains form an alternating ring which encloses part of the gamma chain. F(1) is attached to F(0) by a central stalk formed by the gamma and epsilon chains, while a peripheral stalk is formed by the delta and b chains.

It localises to the cell inner membrane. In terms of biological role, f(1)F(0) ATP synthase produces ATP from ADP in the presence of a proton or sodium gradient. F-type ATPases consist of two structural domains, F(1) containing the extramembraneous catalytic core and F(0) containing the membrane proton channel, linked together by a central stalk and a peripheral stalk. During catalysis, ATP synthesis in the catalytic domain of F(1) is coupled via a rotary mechanism of the central stalk subunits to proton translocation. Key component of the F(0) channel; it plays a direct role in translocation across the membrane. A homomeric c-ring of between 10-14 subunits forms the central stalk rotor element with the F(1) delta and epsilon subunits. The protein is ATP synthase subunit c of Ruegeria pomeroyi (strain ATCC 700808 / DSM 15171 / DSS-3) (Silicibacter pomeroyi).